The chain runs to 258 residues: Snake venom serine protease 3 (258 aa).

The signal sequence occupies residues 1–18 (MVLIRVLANLLILQLSYA). A propeptide spanning residues 19–24 (QKSSEL) is cleaved from the precursor. Residues 25 to 249 (IIGGHPCNIN…YTDWIQSIIA (225 aa)) form the Peptidase S1 domain. 6 disulfides stabilise this stretch: cysteine 31/cysteine 163, cysteine 50/cysteine 66, cysteine 98/cysteine 256, cysteine 142/cysteine 210, cysteine 174/cysteine 189, and cysteine 200/cysteine 225. N-linked (GlcNAc...) asparagine glycosylation occurs at asparagine 44. Active-site charge relay system residues include histidine 65 and aspartate 110. Residue serine 204 is the Charge relay system of the active site. The N-linked (GlcNAc...) asparagine glycan is linked to asparagine 239.

This sequence belongs to the peptidase S1 family. Snake venom subfamily. In terms of assembly, monomer. Expressed by the venom gland.

It localises to the secreted. Its function is as follows. Snake venom serine protease that may act in the hemostasis system of the prey. This Protobothrops jerdonii (Jerdon's pitviper) protein is Snake venom serine protease 3.